We begin with the raw amino-acid sequence, 555 residues long: MSHGPSPRLAESPQLSKGSLLTILGSPSPERMGPADSLPPTPPSGTPSPGPPPALPLPPTPALLADGDWESREELRLRELEEARARAAQMEKTMRWWSDCTANWREKWSKVRAERNRAREEVRQLRQRLDALTKELAGARRERQEAQGESEARGRELARLRGARGGVDRTPDGPETEPEREQEPVPVRDVGSGCERPQGSQELELMESLLKNRPEEPEGCWEVRSAGAGAPRGSSGRQERGRLPWEDTTVEEDASKLTALRLRLDESQKVLLKEREDKMALSRNIEKLEGELSQWKIKYEELSKTKQEMLKQLSILKEAHQDELGRMSEDLEDELGARSSMDRKMAELRGEMERLQAENAAEWGRRERLETEKLGLERENKKLRAQVGDLEEALARRRRQTASALDCDLRASQAALFEKNKELADLKHVHGKLKKQFQEKVAELAHANRRVEQHEAEVKKLRLRVEELKKELAQAEDELDEAHNQARKLQRSLDEQTEQSENLQVQLEHVQSRLRRQQQNAPLFGKIRSARFGAEEAGDGASDLDEDEDLQIQVA.

3 disordered regions span residues 1–68 (MSHG…ADGD), 136–202 (LAGA…GSQE), and 214–254 (PEEP…EEDA). 3 positions are modified to phosphoserine: Ser-12, Ser-26, and Ser-28. A compositionally biased stretch (pro residues) spans 37 to 61 (SLPPTPPSGTPSPGPPPALPLPPTP). Residues 72 to 161 (REELRLRELE…ARGRELARLR (90 aa)) are a coiled coil. Composition is skewed to basic and acidic residues over residues 136–159 (LAGARRERQEAQGESEARGRELAR) and 166–183 (GVDRTPDGPETEPEREQE). The span at 224–236 (RSAGAGAPRGSSG) shows a compositional bias: low complexity. 2 coiled-coil regions span residues 268 to 401 (QKVL…RRQT) and 432 to 522 (KLKK…QNAP). A disordered region spans residues 478 to 555 (ELDEAHNQAR…EDEDLQIQVA (78 aa)). Positions 536–555 (EAGDGASDLDEDEDLQIQVA) are enriched in acidic residues. At Ser-542 the chain carries Phosphoserine.

The chain is Coiled-coil domain-containing protein 102A (CCDC102A) from Bos taurus (Bovine).